Reading from the N-terminus, the 476-residue chain is MGTTSSQSKTLYQKLYDAHIVHEAPNETPLLYIDRHLVHEVTSPQAFDGLRAMGRPVRQPGKTFATMDHNVSTQTKDINASGEMARIQMQELIKNCAEFGVSLYDLNHPFQGIVHVIGPEQGMTLPGMTIVCGDSHTATHGAFGSLAFGIGTSEVEHVLATQTLKQGRAKTMRIEVNGTVGAGITAKDIVLAIIGKTGSAGGTGHVVEFCGSAIEALSMEGRMTLCNMAIEMGAKAGLVAPDDTTFAYLKGRQFAPTGEQWEQGVAYWRTLKSDADAQFDTIVTLDAADIAPQVTWGTNPGQVIAVNQIIPAPESFSDPVERASAEKALAYMDLRPGIKLTEVAIDKVFIGSCTNSRIEDLRAAAAIAQGRKVAKGVQAIVVPGSGPVKAQAEAEGLDKIFIAAGFEWRLPGCSMCLAMNNDRLEPGERCASTSNRNFEGRQGRGGRTHLVSPAMAAAAAVSGHFADVRELSATTH.

[4Fe-4S] cluster contacts are provided by Cys-353, Cys-413, and Cys-416.

This sequence belongs to the aconitase/IPM isomerase family. LeuC type 1 subfamily. In terms of assembly, heterodimer of LeuC and LeuD. It depends on [4Fe-4S] cluster as a cofactor.

The catalysed reaction is (2R,3S)-3-isopropylmalate = (2S)-2-isopropylmalate. The protein operates within amino-acid biosynthesis; L-leucine biosynthesis; L-leucine from 3-methyl-2-oxobutanoate: step 2/4. Catalyzes the isomerization between 2-isopropylmalate and 3-isopropylmalate, via the formation of 2-isopropylmaleate. The protein is 3-isopropylmalate dehydratase large subunit of Yersinia pseudotuberculosis serotype O:1b (strain IP 31758).